Here is a 430-residue protein sequence, read N- to C-terminus: 3-phosphoshikimate 1-carboxyvinyltransferase (430 aa).

Residues lysine 20, serine 21, and arginine 25 each contribute to the 3-phosphoshikimate site. Residue lysine 20 participates in phosphoenolpyruvate binding. Glycine 92 and arginine 120 together coordinate phosphoenolpyruvate. Positions 166, 168, 312, and 339 each coordinate 3-phosphoshikimate. Residue glutamine 168 coordinates phosphoenolpyruvate. The active-site Proton acceptor is aspartate 312. Phosphoenolpyruvate-binding residues include arginine 343 and arginine 387.

The protein belongs to the EPSP synthase family. Monomer.

The protein resides in the cytoplasm. It carries out the reaction 3-phosphoshikimate + phosphoenolpyruvate = 5-O-(1-carboxyvinyl)-3-phosphoshikimate + phosphate. Its pathway is metabolic intermediate biosynthesis; chorismate biosynthesis; chorismate from D-erythrose 4-phosphate and phosphoenolpyruvate: step 6/7. Its function is as follows. Catalyzes the transfer of the enolpyruvyl moiety of phosphoenolpyruvate (PEP) to the 5-hydroxyl of shikimate-3-phosphate (S3P) to produce enolpyruvyl shikimate-3-phosphate and inorganic phosphate. This is 3-phosphoshikimate 1-carboxyvinyltransferase from Lactococcus lactis subsp. lactis (strain IL1403) (Streptococcus lactis).